Here is a 278-residue protein sequence, read N- to C-terminus: Glucosamine-6-phosphate deaminase (278 aa).

The Proton acceptor; for enolization step role is filled by aspartate 72. The active-site For ring-opening step is aspartate 141. Residue histidine 143 is the Proton acceptor; for ring-opening step of the active site. Residue glutamate 148 is the For ring-opening step of the active site.

The protein belongs to the glucosamine/galactosamine-6-phosphate isomerase family. Homohexamer.

Its subcellular location is the cytoplasm. It carries out the reaction alpha-D-glucosamine 6-phosphate + H2O = beta-D-fructose 6-phosphate + NH4(+). The protein operates within nucleotide-sugar biosynthesis; UDP-N-acetyl-alpha-D-glucosamine biosynthesis; alpha-D-glucosamine 6-phosphate from D-fructose 6-phosphate: step 1/1. Catalyzes the reversible conversion of alpha-D-glucosamine 6-phosphate (GlcN-6P) into beta-D-fructose 6-phosphate (Fru-6P) and ammonium ion, a regulatory reaction step in de novo uridine diphosphate-N-acetyl-alpha-D-glucosamine (UDP-GlcNAc) biosynthesis via hexosamine pathway. This Aedes aegypti (Yellowfever mosquito) protein is Glucosamine-6-phosphate deaminase (Gnpda1).